Consider the following 210-residue polypeptide: Secreted isochorismatase effector Isc1 (210 aa).

Catalysis depends on residues aspartate 25, lysine 90, and cysteine 124.

This sequence belongs to the isochorismatase family.

It is found in the secreted. The protein localises to the host cytoplasm. Its subcellular location is the host nucleus. The enzyme catalyses isochorismate + H2O = (2S,3S)-2,3-dihydroxy-2,3-dihydrobenzoate + pyruvate. Its function is as follows. Secreted isochorismatase required for full virulence of P.sojae. Suppresses salicylate-mediated innate immunity of the host by disrupting the plant salicylate metabolism pathway via hydrolysis of its isochorismate precursor. The protein is Secreted isochorismatase effector Isc1 of Phytophthora sojae (strain P6497) (Soybean stem and root rot agent).